Reading from the N-terminus, the 329-residue chain is Malate dehydrogenase (329 aa).

11–17 (GAAGQIA) lines the NAD(+) pocket. 2 residues coordinate substrate: arginine 92 and arginine 98. NAD(+) contacts are provided by residues asparagine 105, glutamine 112, and 129-131 (VGN). 2 residues coordinate substrate: asparagine 131 and arginine 162. Catalysis depends on histidine 187, which acts as the Proton acceptor.

It belongs to the LDH/MDH superfamily. MDH type 2 family.

It carries out the reaction (S)-malate + NAD(+) = oxaloacetate + NADH + H(+). In terms of biological role, catalyzes the reversible oxidation of malate to oxaloacetate. The protein is Malate dehydrogenase of Akkermansia muciniphila (strain ATCC BAA-835 / DSM 22959 / JCM 33894 / BCRC 81048 / CCUG 64013 / CIP 107961 / Muc).